The following is a 638-amino-acid chain: MDCEGTNEEGRGCTGWFSVEAIVEKHTGDTISDDETDNSSDTGSDLIGFIDDSSISDYAEQEVTQALFQAQQKQANTKAVRNLKRKLLGSQNSPLQDITNQHRQQSDSQQNTHQVNNSQAKRRAVDSVPDSGYGYTEVETLTPVQVDKQYEENGGLPSVCSQGGSNASVEDIDVDTHVNSVTQICELLKCSNVKAALLSKFKTVYGVSFAELVRVFKSDKTCCSDWVCAAFGVAGSVAESIKSLIQQYCLYYHIQCLTCNWGVIVLMLVRFTCAKNRTTIKNCLCMLLNVPETQLLIEPPKLRSTAVALYFYKTGLSNISETYGDTPEWIVRQTQLEHSFDDATFDLSKMVQWAFDHDITDDSEIAFKYAQLADIDSNAAAFLKSNCQAKYVKDCATMTRHYKRAQKRSMCMSQWLQYRCSKIEEGGSWKEIAKFLRFQHVNFIYFLQVLKQFLKGTPKHNCIVIYGPPNTGKSQFAMSFIKFMQGSVISYVNSNSHFWLQPLEDAKVAVLDDATYSCWLYIDKYLRNFLDGNPCCIDRKHRSLLQVTCPPLIITSNINPQEDNSLLYLHSRVTVIPFPNTFPFDSNGNPVYALTDVNWKSFFSTTWSRLDLEEDADKENGEPLPAFKCVPGENTRLL.

Positions 84 to 86 (KRK) match the Nuclear localization signal motif. S90 bears the Phosphoserine; by host mark. The segment covering 90-119 (SQNSPLQDITNQHRQQSDSQQNTHQVNNSQ) has biased composition (polar residues). A disordered region spans residues 90–133 (SQNSPLQDITNQHRQQSDSQQNTHQVNNSQAKRRAVDSVPDSGY). Residues 176 to 342 (THVNSVTQIC…QTQLEHSFDD (167 aa)) are DNA-binding region. Residues 441-591 (VNFIYFLQVL…FPFDSNGNPV (151 aa)) enclose the SF3 helicase domain. 467–474 (GPPNTGKS) lines the ATP pocket.

Belongs to the papillomaviridae E1 protein family. As to quaternary structure, can form hexamers. Interacts with E2 protein; this interaction increases E1 DNA binding specificity. Interacts with host DNA polymerase subunit POLA2. Interacts with host single stranded DNA-binding protein RPA1. Interacts with host TOP1; this interaction stimulates the enzymatic activity of TOP1. Phosphorylated.

It localises to the host nucleus. The enzyme catalyses Couples ATP hydrolysis with the unwinding of duplex DNA by translocating in the 3'-5' direction.. It carries out the reaction ATP + H2O = ADP + phosphate + H(+). In terms of biological role, ATP-dependent DNA 3'-5' helicase required for initiation of viral DNA replication. It forms a complex with the viral E2 protein. The E1-E2 complex binds to the replication origin which contains binding sites for both proteins. During the initial step, a dimer of E1 interacts with a dimer of protein E2 leading to a complex that binds the viral origin of replication with high specificity. Then, a second dimer of E1 displaces the E2 dimer in an ATP-dependent manner to form the E1 tetramer. Following this, two E1 monomers are added to each half of the site, which results in the formation of two E1 trimers on the viral ori. Subsequently, two hexamers will be created. The double hexamer acts as a bi-directional helicase machinery and unwinds the viral DNA and then recruits the host DNA polymerase to start replication. This Homo sapiens (Human) protein is Replication protein E1.